The chain runs to 176 residues: Protein GrpE (176 aa).

Belongs to the GrpE family. In terms of assembly, homodimer.

It is found in the cytoplasm. Its function is as follows. Participates actively in the response to hyperosmotic and heat shock by preventing the aggregation of stress-denatured proteins, in association with DnaK and GrpE. It is the nucleotide exchange factor for DnaK and may function as a thermosensor. Unfolded proteins bind initially to DnaJ; upon interaction with the DnaJ-bound protein, DnaK hydrolyzes its bound ATP, resulting in the formation of a stable complex. GrpE releases ADP from DnaK; ATP binding to DnaK triggers the release of the substrate protein, thus completing the reaction cycle. Several rounds of ATP-dependent interactions between DnaJ, DnaK and GrpE are required for fully efficient folding. This chain is Protein GrpE, found in Meiothermus ruber.